The chain runs to 316 residues: 4-hydroxy-3-methylbut-2-enyl diphosphate reductase (316 aa).

Residue Cys-12 coordinates [4Fe-4S] cluster. His-41 and His-74 together coordinate (2E)-4-hydroxy-3-methylbut-2-enyl diphosphate. Dimethylallyl diphosphate is bound by residues His-41 and His-74. Isopentenyl diphosphate-binding residues include His-41 and His-74. Cys-96 contributes to the [4Fe-4S] cluster binding site. A (2E)-4-hydroxy-3-methylbut-2-enyl diphosphate-binding site is contributed by His-124. His-124 is a dimethylallyl diphosphate binding site. Residue His-124 participates in isopentenyl diphosphate binding. Glu-126 functions as the Proton donor in the catalytic mechanism. Thr-165 contributes to the (2E)-4-hydroxy-3-methylbut-2-enyl diphosphate binding site. Cys-195 contributes to the [4Fe-4S] cluster binding site. Residues Ser-223, Ser-224, Asn-225, and Ser-267 each coordinate (2E)-4-hydroxy-3-methylbut-2-enyl diphosphate. Dimethylallyl diphosphate contacts are provided by Ser-223, Ser-224, Asn-225, and Ser-267. Isopentenyl diphosphate is bound by residues Ser-223, Ser-224, Asn-225, and Ser-267.

It belongs to the IspH family. [4Fe-4S] cluster is required as a cofactor.

The catalysed reaction is isopentenyl diphosphate + 2 oxidized [2Fe-2S]-[ferredoxin] + H2O = (2E)-4-hydroxy-3-methylbut-2-enyl diphosphate + 2 reduced [2Fe-2S]-[ferredoxin] + 2 H(+). The enzyme catalyses dimethylallyl diphosphate + 2 oxidized [2Fe-2S]-[ferredoxin] + H2O = (2E)-4-hydroxy-3-methylbut-2-enyl diphosphate + 2 reduced [2Fe-2S]-[ferredoxin] + 2 H(+). It functions in the pathway isoprenoid biosynthesis; dimethylallyl diphosphate biosynthesis; dimethylallyl diphosphate from (2E)-4-hydroxy-3-methylbutenyl diphosphate: step 1/1. It participates in isoprenoid biosynthesis; isopentenyl diphosphate biosynthesis via DXP pathway; isopentenyl diphosphate from 1-deoxy-D-xylulose 5-phosphate: step 6/6. In terms of biological role, catalyzes the conversion of 1-hydroxy-2-methyl-2-(E)-butenyl 4-diphosphate (HMBPP) into a mixture of isopentenyl diphosphate (IPP) and dimethylallyl diphosphate (DMAPP). Acts in the terminal step of the DOXP/MEP pathway for isoprenoid precursor biosynthesis. The chain is 4-hydroxy-3-methylbut-2-enyl diphosphate reductase from Acidithiobacillus ferrooxidans (strain ATCC 53993 / BNL-5-31) (Leptospirillum ferrooxidans (ATCC 53993)).